The chain runs to 296 residues: Transmembrane protein 156 (296 aa).

The Cytoplasmic portion of the chain corresponds to 1–4 (MTKT). The chain crosses the membrane as a helical span at residues 5–25 (ALLKLFVAIVITFILILPEYF). Over 26–211 (KTPKERTLEL…EMDIKNITCS (186 aa)) the chain is Extracellular. N-linked (GlcNAc...) asparagine glycosylation is found at Asn45 and Asn156. A helical membrane pass occupies residues 212–232 (MKITWYILVLLVFIFLIILTI). The Cytoplasmic segment spans residues 233-296 (RKILEGQRRV…QEVLPPIPEL (64 aa)).

It localises to the membrane. This Homo sapiens (Human) protein is Transmembrane protein 156 (TMEM156).